The primary structure comprises 168 residues: Plasma membrane-associated cation-binding protein 2 (168 aa).

Gly-2 carries N-myristoyl glycine lipidation. 7 repeat units span residues 26–30 (VEEEK), 69–73 (VEEKK), 94–99 (VEEEKK), 103–107 (VEEKK), 110–115 (VEEEKK), 118–122 (VEEKK), and 124–129 (VEEEKK). The tract at residues 26 to 129 (VEEEKPREVE…EKKPVEEEKK (104 aa)) is 7 X 5 AA approximate repeats of V-E-E-K-K. Residues 56 to 77 (EEIIATGEKEIEIVEEKKEEAK) adopt a coiled-coil conformation. Basic and acidic residues predominate over residues 88-131 (EEKKPAVEEEKKTAPVEEKKPAVEEEKKPAVEEKKPVEEEKKEV). The interval 88–168 (EEKKPAVEEE…ETPAAAPQKA (81 aa)) is disordered. The span at 152–168 (ETPAKAPETPAAAPQKA) shows a compositional bias: low complexity.

Belongs to the DREPP family. In terms of assembly, binds microtubules. Interacts with calcium ion Ca(2+), calmodulin and some phosphatidylinositol phosphates (PtdInsPs) such as phosphatidylinositol 3,5-bisphosphate [PtdIns(3,5)P(2)], PtdIns(4,5)P(2) and PtdIns(3,4,5)P(3). It depends on Cu(2+) as a cofactor. As to expression, mostly expressed in the expanding cells, specifically in roots (except in root tips) and flowers (at protein level). Also detected in cotyledons, hypocotyls and trichome stalks.

Its subcellular location is the cell membrane. The protein localises to the cytoplasm. It is found in the cytoskeleton. Functionally, may be involved in intracellular signaling through interaction with PtdInsPs and calmodulin (CaM); may keep PtdInsPs attached to the plasma membrane until Ca(2+)-CaM reaches a competitive concentration subsequent to an increase triggered by a stimulus, thus leading to PtdInsPs release and subsequent activation of InsPs-dependent signaling cascade. Binds to microtubules and inhibits tubulin polymerization. Regulates directional cell growth and cortical microtubule organization by destabilizing microtubules (e.g. in cotyledon pavement cells). This chain is Plasma membrane-associated cation-binding protein 2, found in Arabidopsis thaliana (Mouse-ear cress).